The primary structure comprises 204 residues: Large ribosomal subunit protein bL25 (204 aa).

The segment at 1 to 23 (MSETLHLSAETRDRAGKGASRAL) is disordered.

This sequence belongs to the bacterial ribosomal protein bL25 family. CTC subfamily. Part of the 50S ribosomal subunit; part of the 5S rRNA/L5/L18/L25 subcomplex. Contacts the 5S rRNA. Binds to the 5S rRNA independently of L5 and L18.

Functionally, this is one of the proteins that binds to the 5S RNA in the ribosome where it forms part of the central protuberance. The chain is Large ribosomal subunit protein bL25 from Novosphingobium aromaticivorans (strain ATCC 700278 / DSM 12444 / CCUG 56034 / CIP 105152 / NBRC 16084 / F199).